The sequence spans 631 residues: Interferon-induced GTP-binding protein Mx1 (631 aa).

A Dynamin-type G domain is found at 33 to 306 (DLALPAIAVI…LTSHICKSLP (274 aa)). Residues 43-50 (GDQSSGKS) form a G1 motif region. 43–50 (GDQSSGKS) contributes to the GTP binding site. The segment at 68 to 70 (VTR) is G2 motif. The tract at residues 144–147 (DLPG) is G3 motif. GTP is bound by residues 144–148 (DLPGI) and 213–216 (TKPD). Positions 213-216 (TKPD) are G4 motif. Residues 245-248 (KCRG) are G5 motif. Residues 307–332 (LLEDQINSSHQSASEELQKYGADIPE) form a bundle signaling element (BSE) region. Positions 332–499 (EDDRTRMSFL…HFQMEQIVYC (168 aa)) are middle domain. The segment at 333 to 601 (DDRTRMSFLV…TSKCSWFLEE (269 aa)) is stalk. The segment at 520–522 (KTK) is critical for lipid-binding. The GED domain occupies 543–631 (TTEMTQHLKA…ARQKLAKFSD (89 aa)).

The protein belongs to the TRAFAC class dynamin-like GTPase superfamily. Dynamin/Fzo/YdjA family. Homooligomer. Oligomerizes into multimeric filamentous or ring-like structures by virtue of its stalk domain. Oligomerization is critical for GTPase activity, protein stability, and recognition of viral target structures. Interacts with TRPC1, TRPC3, TRPC4, TRPC5, TRPC6 and TRPC7. Interacts with HSPA5. Interacts with TUBB/TUBB5. Interacts with DDX39A and DDX39B. ISGylated.

It is found in the cytoplasm. The protein resides in the nucleus. The protein localises to the endoplasmic reticulum membrane. Its subcellular location is the perinuclear region. Interferon-induced dynamin-like GTPase with antiviral activity against influenza A virus, (IAV), influenza B virus (IBV) and Thogoto virus (THOV). Inhibits FLUAV by interfering with the process of primary transcription, probably by affecting the viral polymerase function. This chain is Interferon-induced GTP-binding protein Mx1 (Mx1), found in Mus musculus (Mouse).